Consider the following 635-residue polypeptide: Phosphomethylpyrimidine synthase (635 aa).

A compositionally biased stretch (polar residues) spans 1–14; it reads MNATVSSAVQSSLP. The interval 1–41 is disordered; it reads MNATVSSAVQSSLPFSGKTAQVDEGTVKPLPRSQKTYLSGS. Residues Asn-240, Met-269, Tyr-298, His-334, 354 to 356, 395 to 398, and Glu-434 contribute to the substrate site; these read SRG and DGLR. His-438 lines the Zn(2+) pocket. Tyr-461 is a substrate binding site. Position 502 (His-502) interacts with Zn(2+). [4Fe-4S] cluster-binding residues include Cys-582, Cys-585, and Cys-590.

It belongs to the ThiC family. In terms of assembly, homodimer. Requires [4Fe-4S] cluster as cofactor.

It catalyses the reaction 5-amino-1-(5-phospho-beta-D-ribosyl)imidazole + S-adenosyl-L-methionine = 4-amino-2-methyl-5-(phosphooxymethyl)pyrimidine + CO + 5'-deoxyadenosine + formate + L-methionine + 3 H(+). It functions in the pathway cofactor biosynthesis; thiamine diphosphate biosynthesis. Catalyzes the synthesis of the hydroxymethylpyrimidine phosphate (HMP-P) moiety of thiamine from aminoimidazole ribotide (AIR) in a radical S-adenosyl-L-methionine (SAM)-dependent reaction. The protein is Phosphomethylpyrimidine synthase of Nitrosospira multiformis (strain ATCC 25196 / NCIMB 11849 / C 71).